We begin with the raw amino-acid sequence, 253 residues long: Beta-crystallin B1 (253 aa).

Over residues 1–18 (MSQPAAKASATAAVNPGP) the composition is skewed to low complexity. The tract at residues 1–53 (MSQPAAKASATAAVNPGPDGKGKAGPPPGPAPGSGPAPAPAPAPAQPAPAAKA) is disordered. Residue serine 2 is modified to N-acetylserine. An N-terminal arm region spans residues 2–59 (SQPAAKASATAAVNPGPDGKGKAGPPPGPAPGSGPAPAPAPAPAQPAPAAKAELPPGS). Residues 25–47 (GPPPGPAPGSGPAPAPAPAPAQP) are compositionally biased toward pro residues. 2 Beta/gamma crystallin 'Greek key' domains span residues 60–99 (YKLVVFEQENFQGRRVEFSGECLNLGDRGFERVRSIIVTS) and 100–144 (GPWV…RPIK). Residues 145–149 (MDAQE) form a connecting peptide region. Beta/gamma crystallin 'Greek key' domains lie at 150-191 (HKLC…RVSS) and 192-234 (GTWV…RRLR). A C-terminal arm region spans residues 236 to 253 (RQWHREGCFPVLAAEPPK).

Belongs to the beta/gamma-crystallin family. In terms of assembly, homo/heterodimer, or complexes of higher-order. The structure of beta-crystallin oligomers seems to be stabilized through interactions between the N-terminal arms. In terms of processing, specific cleavages in the N-terminal arm occur during lens maturation and give rise to truncated forms, leading to impaired oligomerization and protein insolubilization.

Crystallins are the dominant structural components of the vertebrate eye lens. The chain is Beta-crystallin B1 (CRYBB1) from Bos taurus (Bovine).